Here is a 338-residue protein sequence, read N- to C-terminus: Fructose-1,6-bisphosphatase class 1 (338 aa).

Mg(2+) is bound by residues E91, D113, L115, and D116. Substrate-binding positions include 116 to 119 (DGSS), N208, and K274. Residue E280 coordinates Mg(2+).

This sequence belongs to the FBPase class 1 family. In terms of assembly, homotetramer. Mg(2+) serves as cofactor.

It localises to the cytoplasm. It carries out the reaction beta-D-fructose 1,6-bisphosphate + H2O = beta-D-fructose 6-phosphate + phosphate. The protein operates within carbohydrate biosynthesis; gluconeogenesis. This chain is Fructose-1,6-bisphosphatase class 1, found in Ralstonia pickettii (strain 12J).